A 285-amino-acid chain; its full sequence is uncharacterized protein (285 aa).

H110, D131, H133, D135, D214, and D216 together coordinate Mn(2+).

Belongs to the arginase family. The cofactor is Mn(2+).

This is an uncharacterized protein from Methanothermus fervidus.